Consider the following 445-residue polypeptide: Phosphoglucosamine mutase (445 aa).

S102 acts as the Phosphoserine intermediate in catalysis. Mg(2+) is bound by residues S102, D241, D243, and D245. S102 is subject to Phosphoserine.

It belongs to the phosphohexose mutase family. Mg(2+) is required as a cofactor. Post-translationally, activated by phosphorylation.

The enzyme catalyses alpha-D-glucosamine 1-phosphate = D-glucosamine 6-phosphate. Catalyzes the conversion of glucosamine-6-phosphate to glucosamine-1-phosphate. This chain is Phosphoglucosamine mutase, found in Haemophilus influenzae (strain ATCC 51907 / DSM 11121 / KW20 / Rd).